A 127-amino-acid polypeptide reads, in one-letter code: Glycine cleavage system H protein (127 aa).

In terms of domain architecture, Lipoyl-binding spans 24–106 (VVTVGVTFHA…YGAGWFFKLK (83 aa)). Lysine 65 is subject to N6-lipoyllysine.

It belongs to the GcvH family. In terms of assembly, the glycine cleavage system is composed of four proteins: P, T, L and H. It depends on (R)-lipoate as a cofactor.

Functionally, the glycine cleavage system catalyzes the degradation of glycine. The H protein shuttles the methylamine group of glycine from the P protein to the T protein. The protein is Glycine cleavage system H protein of Laribacter hongkongensis (strain HLHK9).